The following is a 471-amino-acid chain: Protoheme IX farnesyltransferase, mitochondrial (471 aa).

The transit peptide at 1-60 (MLLSNVAVNRTVVHTQLVSGSRSALHALSRTSHSVPVTHTHQRRHIFSHKRRLSSSTLAI) directs the protein to the mitochondrion. Transmembrane regions (helical) follow at residues 188–208 (AVSLTNLLFLTVGTALCSGSA), 247–267 (ITGTVGTAALYFGVNPTVAIL), 287–307 (IINTWVGAVVGAIPPLMGWAA), 312–332 (LLHPGAWCLAGLLYAWQFPHF), 368–388 (LLMFPLCVGLSYYNVTDWWFV), and 430–450 (KLFWGSVVHLPGVLLLAMIHK).

This sequence belongs to the UbiA prenyltransferase family.

It is found in the mitochondrion membrane. The catalysed reaction is heme b + (2E,6E)-farnesyl diphosphate + H2O = Fe(II)-heme o + diphosphate. Its function is as follows. Converts protoheme IX and farnesyl diphosphate to heme O. The protein is Protoheme IX farnesyltransferase, mitochondrial (COX10) of Yarrowia lipolytica (strain CLIB 122 / E 150) (Yeast).